Reading from the N-terminus, the 1076-residue chain is DNA-directed RNA polymerase subunit beta (1076 aa).

Belongs to the RNA polymerase beta chain family. In plastids the minimal PEP RNA polymerase catalytic core is composed of four subunits: alpha, beta, beta', and beta''. When a (nuclear-encoded) sigma factor is associated with the core the holoenzyme is formed, which can initiate transcription.

The protein resides in the plastid. The catalysed reaction is RNA(n) + a ribonucleoside 5'-triphosphate = RNA(n+1) + diphosphate. In terms of biological role, DNA-dependent RNA polymerase catalyzes the transcription of DNA into RNA using the four ribonucleoside triphosphates as substrates. The polypeptide is DNA-directed RNA polymerase subunit beta (Euglena longa (Euglenophycean alga)).